Here is a 350-residue protein sequence, read N- to C-terminus: Serine-threonine kinase receptor-associated protein (350 aa).

7 WD repeats span residues 12 to 56 (GHTR…GTFL), 57 to 96 (GHKG…ELIT), 98 to 137 (AHKH…AEPD), 141 to 179 (GHTS…EVKA), 180 to 212 (LNVA…HSAE), 221 to 262 (EAPA…ESYK), and 263 to 302 (GHFG…TYGL). A disordered region spans residues 311–350 (ENAEAAKARTTLPGTAEEEIEEVASENSDSVYSSTPEVKA). Residues 335-350 (SENSDSVYSSTPEVKA) are compositionally biased toward polar residues.

It belongs to the WD repeat STRAP family. Part of the core SMN complex.

The protein resides in the cytoplasm. It localises to the nucleus. Functionally, the SMN complex catalyzes the assembly of small nuclear ribonucleoproteins (snRNPs), the building blocks of the spliceosome, and thereby plays an important role in the splicing of cellular pre-mRNAs. Most spliceosomal snRNPs contain a common set of Sm proteins SNRPB, SNRPD1, SNRPD2, SNRPD3, SNRPE, SNRPF and SNRPG that assemble in a heptameric protein ring on the Sm site of the small nuclear RNA to form the core snRNP (Sm core). In the cytosol, the Sm proteins SNRPD1, SNRPD2, SNRPE, SNRPF and SNRPG are trapped in an inactive 6S pICln-Sm complex by the chaperone CLNS1A that controls the assembly of the core snRNP. To assemble core snRNPs, the SMN complex accepts the trapped 5Sm proteins from CLNS1A forming an intermediate. Binding of snRNA inside 5Sm triggers eviction of the SMN complex, thereby allowing binding of SNRPD3 and SNRPB to complete assembly of the core snRNP. STRAP plays a role in the cellular distribution of the SMN complex. This Gallus gallus (Chicken) protein is Serine-threonine kinase receptor-associated protein (STRAP).